The following is a 164-amino-acid chain: Phosphopantetheine adenylyltransferase (164 aa).

Substrate is bound at residue S10. Residues 10-11 and H18 contribute to the ATP site; that span reads SF. K42, L74, and R88 together coordinate substrate. ATP-binding positions include 89–91, E99, and 124–130; these read GLR and YAFLSSS.

Belongs to the bacterial CoaD family. Homohexamer. Mg(2+) serves as cofactor.

The protein localises to the cytoplasm. It carries out the reaction (R)-4'-phosphopantetheine + ATP + H(+) = 3'-dephospho-CoA + diphosphate. It participates in cofactor biosynthesis; coenzyme A biosynthesis; CoA from (R)-pantothenate: step 4/5. Its function is as follows. Reversibly transfers an adenylyl group from ATP to 4'-phosphopantetheine, yielding dephospho-CoA (dPCoA) and pyrophosphate. This Geobacillus thermodenitrificans (strain NG80-2) protein is Phosphopantetheine adenylyltransferase.